A 291-amino-acid polypeptide reads, in one-letter code: MSMDCLSYFFNYDPPVQLQDCFIPEMDMIIPETDSFFFQSQPQLEFHQPLFQEEAPSQTHFDPFCDQFLSPQEIFLPNPKNEIFNETHDLDFFLPTPKRQRLVNSSYNCNTQNHFQSRNPNFFDPFGDTDFVPESCTFQEFRVPDFSLAFKVGRGDQDDSKKPTLSSQSIAARGRRRRIAEKTHELGKLIPGGNKLNTAEMFQAAAKYVKFLQSQVGILQLMQTTKKGSSNVQMETQYLLESQAIQEKLSTEEVCLVPCEMVQDLTTEETICRTPNISREINKLLSKHLAN.

A bHLH domain is found at Pro163–Leu212.

Homodimer. In terms of tissue distribution, expressed constitutively in roots, leaves, stems, and flowers.

Its subcellular location is the nucleus. This chain is Transcription factor bHLH53 (BHLH53), found in Arabidopsis thaliana (Mouse-ear cress).